The chain runs to 1051 residues: Lateral signaling target protein 2 homolog (1051 aa).

4 disordered regions span residues 305–440 (PLGS…DEDL), 516–552 (GSNAATERQQQQQHMDELQPGDQQQQQQQLQDEPSTS), 566–703 (HLPS…NASS), and 837–968 (IDLA…DGKA). The segment covering 319 to 358 (NNTSSSTSNNNNNNNNNSSSSSSSSSGSGSNTAKTSTSST) has biased composition (low complexity). Basic and acidic residues predominate over residues 360-370 (KAVERLVDHRN). Residues 371–391 (NNSSTVAGATQPSTARSPSML) show a composition bias toward polar residues. Low complexity-rich tracts occupy residues 392-401 (SLSAGSTPTA) and 409-428 (PSHSIASTSSAATTSTNPPA). Residues 518 to 528 (NAATERQQQQQ) are compositionally biased toward polar residues. 2 stretches are compositionally biased toward low complexity: residues 533–549 (LQPGDQQQQQQQLQDEP) and 568–582 (PSSSSENEQAPSSNQ). Phosphoserine occurs at positions 569 and 570. Positions 583–596 (QTTIKTPNGNQSMP) are enriched in polar residues. Residues 597-606 (NSSSSSSNHN) show a composition bias toward low complexity. 2 stretches are compositionally biased toward basic residues: residues 607–637 (NNRHRHSHSHSHSSHHHHHHHRHHHHTHPHH) and 650–672 (HHHHHHHHHQSHPHRINRSARKR). Over residues 692 to 703 (TPGSADTSNASS) the composition is skewed to polar residues. Low complexity predominate over residues 840–852 (ASGNNNGNSNAAA). Serine 861 is modified (phosphoserine). 2 stretches are compositionally biased toward low complexity: residues 879–924 (QQQQ…SPIS) and 937–960 (SSIGTTSTITPSTAAATATTMSPP). Residues 965 to 1025 (DGKAPRCMSC…VCRECYVREV (61 aa)) form an FYVE-type zinc finger. 8 residues coordinate Zn(2+): cysteine 971, cysteine 974, cysteine 987, cysteine 990, cysteine 995, cysteine 998, cysteine 1017, and cysteine 1020. The segment at 1028–1051 (SRQAPAQPSQAHGQASRPQAASAS) is disordered.

This sequence belongs to the lst-2 family.

Functionally, negative regulator of epidermal growth factor receptor (EGFR) signaling. This chain is Lateral signaling target protein 2 homolog, found in Drosophila mojavensis (Fruit fly).